The primary structure comprises 702 residues: Polyribonucleotide nucleotidyltransferase (702 aa).

Aspartate 485 and aspartate 491 together coordinate Mg(2+). Residues 552–612 enclose the KH domain; it reads PRTEIICIDP…EGVKKAISII (61 aa). One can recognise an S1 motif domain in the interval 622–690; it reads GEIYLGKVTK…NQGRINLSRK (69 aa).

The protein belongs to the polyribonucleotide nucleotidyltransferase family. Mg(2+) serves as cofactor.

Its subcellular location is the cytoplasm. The catalysed reaction is RNA(n+1) + phosphate = RNA(n) + a ribonucleoside 5'-diphosphate. Involved in mRNA degradation. Catalyzes the phosphorolysis of single-stranded polyribonucleotides processively in the 3'- to 5'-direction. The polypeptide is Polyribonucleotide nucleotidyltransferase (Clostridium botulinum (strain Loch Maree / Type A3)).